The following is a 252-amino-acid chain: Imidazole glycerol phosphate synthase subunit HisF (252 aa).

Active-site residues include aspartate 11 and aspartate 130.

This sequence belongs to the HisA/HisF family. Heterodimer of HisH and HisF.

It is found in the cytoplasm. The enzyme catalyses 5-[(5-phospho-1-deoxy-D-ribulos-1-ylimino)methylamino]-1-(5-phospho-beta-D-ribosyl)imidazole-4-carboxamide + L-glutamine = D-erythro-1-(imidazol-4-yl)glycerol 3-phosphate + 5-amino-1-(5-phospho-beta-D-ribosyl)imidazole-4-carboxamide + L-glutamate + H(+). It functions in the pathway amino-acid biosynthesis; L-histidine biosynthesis; L-histidine from 5-phospho-alpha-D-ribose 1-diphosphate: step 5/9. Its function is as follows. IGPS catalyzes the conversion of PRFAR and glutamine to IGP, AICAR and glutamate. The HisF subunit catalyzes the cyclization activity that produces IGP and AICAR from PRFAR using the ammonia provided by the HisH subunit. The sequence is that of Imidazole glycerol phosphate synthase subunit HisF from Streptococcus sanguinis (strain SK36).